Consider the following 399-residue polypeptide: L-methionine gamma-lyase (399 aa).

Pyridoxal 5'-phosphate contacts are provided by residues 59–61 (YTR) and 89–90 (GI). Tyrosine 114 lines the substrate pocket. 209–211 (SAT) lines the pyridoxal 5'-phosphate pocket. N6-(pyridoxal phosphate)lysine is present on lysine 212. Arginine 376 is a substrate binding site.

Belongs to the trans-sulfuration enzymes family. L-methionine gamma-lyase subfamily. As to quaternary structure, homotetramer; dimer of active dimers. It depends on pyridoxal 5'-phosphate as a cofactor.

It carries out the reaction L-methionine + H2O = methanethiol + 2-oxobutanoate + NH4(+). The catalysed reaction is L-homocysteine + H2O = 2-oxobutanoate + hydrogen sulfide + NH4(+) + H(+). In terms of biological role, catalyzes the alpha,gamma-elimination of L-methionine to produce methanethiol, 2-oxobutanoate and ammonia; methanethiol (methyl mercaptan) is considered to be one of the main causes of the oral malodor in periodontal disease and may also play a role in the pathogenicity of P.gingivalis in that disease. Is also able to catalyze the alpha,gamma-elimination of L-homocysteine. The protein is L-methionine gamma-lyase of Porphyromonas gingivalis (strain ATCC BAA-308 / W83).